The chain runs to 399 residues: Probable peptidoglycan glycosyltransferase FtsW (399 aa).

The Cytoplasmic segment spans residues 1-25 (MTAAAPSKPLPRTPRVRQAYPLDYP). Residues 26–46 (LLLCALGLLAFGWVMVTSASM) traverse the membrane as a helical segment. Residues 47–64 (SIAEACCQNPFHYSIRHA) lie on the Periplasmic side of the membrane. A helical transmembrane segment spans residues 65–85 (IALGLALMLGLMAYSVPSHWW). Residues 86-88 (ERH) are Cytoplasmic-facing. Residues 89–109 (GVWLFLASALVLILVLIPGIG) traverse the membrane as a helical segment. The Periplasmic segment spans residues 110 to 117 (RTVNGATR). A helical transmembrane segment spans residues 118–138 (WIPLGPLNVQPSEFVKLFAIL). The Cytoplasmic segment spans residues 139–153 (YVAGYLVRHADKVVN). The helical transmembrane segment at 154-174 (QLSGFIRPLILIGAAALLILM) threads the bilayer. Residues 175–177 (QPD) lie on the Periplasmic side of the membrane. A run of 2 helical transmembrane segments spans residues 178-198 (FGTT…GGAS) and 199-219 (LLPF…LVIF). Topologically, residues 220 to 281 (SPYRLERVVS…PEAHTDFLPS (62 aa)) are periplasmic. The chain crosses the membrane as a helical span at residues 282 to 302 (VIGEELGLAGMLVLIAAFVFL). Over 303-326 (SWRAMSIGVRAEALKRPFESYVAQ) the chain is Cytoplasmic. A helical transmembrane segment spans residues 327 to 347 (GIGLWIGLQSFVNLGVNVGIL). Residues 348-353 (PTKGLT) are Periplasmic-facing. A helical transmembrane segment spans residues 354 to 374 (LPFMSYGSNSLMVGCMAVAIL). The Cytoplasmic segment spans residues 375 to 399 (LRIDVMLRRVESEAKFKRGTPWSRA).

It belongs to the SEDS family. FtsW subfamily.

The protein localises to the cell inner membrane. It carries out the reaction [GlcNAc-(1-&gt;4)-Mur2Ac(oyl-L-Ala-gamma-D-Glu-L-Lys-D-Ala-D-Ala)](n)-di-trans,octa-cis-undecaprenyl diphosphate + beta-D-GlcNAc-(1-&gt;4)-Mur2Ac(oyl-L-Ala-gamma-D-Glu-L-Lys-D-Ala-D-Ala)-di-trans,octa-cis-undecaprenyl diphosphate = [GlcNAc-(1-&gt;4)-Mur2Ac(oyl-L-Ala-gamma-D-Glu-L-Lys-D-Ala-D-Ala)](n+1)-di-trans,octa-cis-undecaprenyl diphosphate + di-trans,octa-cis-undecaprenyl diphosphate + H(+). The protein operates within cell wall biogenesis; peptidoglycan biosynthesis. Its function is as follows. Peptidoglycan polymerase that is essential for cell division. This chain is Probable peptidoglycan glycosyltransferase FtsW, found in Allochromatium vinosum (strain ATCC 17899 / DSM 180 / NBRC 103801 / NCIMB 10441 / D) (Chromatium vinosum).